The chain runs to 98 residues: Large ribosomal subunit protein eL21 (98 aa).

This sequence belongs to the eukaryotic ribosomal protein eL21 family.

This Korarchaeum cryptofilum (strain OPF8) protein is Large ribosomal subunit protein eL21.